Here is a 130-residue protein sequence, read N- to C-terminus: S-protein homolog 32 (130 aa).

The first 21 residues, 1–21, serve as a signal peptide directing secretion; that stretch reads MKYFTIFVFVFSLCMLGHVSG.

It belongs to the plant self-incompatibility (S1) protein family.

The protein resides in the secreted. This is S-protein homolog 32 from Arabidopsis thaliana (Mouse-ear cress).